The following is a 116-amino-acid chain: Nucleoid-associated protein PMM0020 (116 aa).

The span at 87-98 (ESSTTTMKERMN) shows a compositional bias: basic and acidic residues. The segment at 87–116 (ESSTTTMKERMNDLTGGLNLNLPGLDNNDS) is disordered. Residues 99–116 (DLTGGLNLNLPGLDNNDS) are compositionally biased toward low complexity.

The protein belongs to the YbaB/EbfC family. In terms of assembly, homodimer.

It is found in the cytoplasm. Its subcellular location is the nucleoid. Functionally, binds to DNA and alters its conformation. May be involved in regulation of gene expression, nucleoid organization and DNA protection. The chain is Nucleoid-associated protein PMM0020 from Prochlorococcus marinus subsp. pastoris (strain CCMP1986 / NIES-2087 / MED4).